Here is a 152-residue protein sequence, read N- to C-terminus: uncharacterized protein (152 aa).

Residues 1-5 (MWFPQ) lie on the Cytoplasmic side of the membrane. Residues 6 to 26 (IIAGMAAGGAASAMTPGKVLF) traverse the membrane as a helical segment. Residues 27-38 (TNALGLGCSRSR) are Extracellular-facing. Residues 39 to 59 (GLFLEMFGTAVLCLTVLMTAV) traverse the membrane as a helical segment. Residues 60–65 (EKRETN) are Cytoplasmic-facing. A helical transmembrane segment spans residues 66 to 86 (FMAALPIGISLFMAHMALTGY). The Extracellular segment spans residues 87 to 110 (TGTGVNPARSLGAAVAARYFPHYH). Residues 92 to 94 (NPA) carry the NPA motif. The chain crosses the membrane as a helical span at residues 111–131 (WIYWISPLLGAFLAWSVWQLL). Topologically, residues 132-152 (QILDYTTYVNAEKAAGQKKED) are cytoplasmic.

The protein belongs to the MIP/aquaporin (TC 1.A.8) family.

The protein resides in the membrane. This is an uncharacterized protein from Saccharomyces cerevisiae (strain RM11-1a) (Baker's yeast).